We begin with the raw amino-acid sequence, 307 residues long: Membrane protein insertase YidC 1 (307 aa).

Positions 1–22 (MKSKKGLTLTITLGTLALFLSG) are cleaved as a signal peptide. A lipid anchor (N-palmitoyl cysteine) is attached at C23. C23 carries the S-diacylglycerol cysteine lipid modification. 5 helical membrane passes run 59–79 (YGWA…PMMI), 136–156 (GIGC…YYAI), 177–197 (LILA…SMIG), 205–225 (TMRL…MSAP), and 226–246 (AGLG…TLII). The disordered stretch occupies residues 260–307 (ELKKHPIKTPTPTQPKPINATESKPSHPRPQNNAGRGRNAGKQQRHHK).

This sequence belongs to the OXA1/ALB3/YidC family. Type 2 subfamily.

The protein localises to the cell membrane. Required for the insertion and/or proper folding and/or complex formation of integral membrane proteins into the membrane. Involved in integration of membrane proteins that insert both dependently and independently of the Sec translocase complex, as well as at least some lipoproteins. The protein is Membrane protein insertase YidC 1 of Lactiplantibacillus plantarum (strain ATCC BAA-793 / NCIMB 8826 / WCFS1) (Lactobacillus plantarum).